The following is a 113-amino-acid chain: uncharacterized protein (113 aa).

It to H.pylori HP0245/JHP0230.

This is an uncharacterized protein from Campylobacter jejuni subsp. jejuni serotype O:2 (strain ATCC 700819 / NCTC 11168).